The primary structure comprises 329 residues: Neuropeptides B/W receptor type 1 (329 aa).

The Extracellular segment spans residues 1-43; it reads MHNLTLFESGGDNVSCGGSSLGCPNGSSLAPLPLPQPLAVAVP. 3 N-linked (GlcNAc...) asparagine glycosylation sites follow: Asn3, Asn13, and Asn25. A helical transmembrane segment spans residues 44-64; sequence VVYGVICAVGLAGNSAVLYVL. Over 65–75 the chain is Cytoplasmic; sequence LRTPRMKTVTN. Residues 76-96 form a helical membrane-spanning segment; sequence VFILNLAIADELFTLVLPINI. Residues 97–112 lie on the Extracellular side of the membrane; it reads ADFLLRRWPFGEVMCK. A disulfide bond links Cys111 and Cys190. Residues 113–133 traverse the membrane as a helical segment; sequence LIVAVDQYNTFSSLYFLAVMS. Residues 134–158 are Cytoplasmic-facing; the sequence is ADRYLVVLATAESRRVSGRTYGAAR. A helical membrane pass occupies residues 159-179; the sequence is AVSLAVWALVTLVVLPFAVFA. The Extracellular segment spans residues 180-209; the sequence is RLDEEQGRRQCVLVFPQPEAFWWRASRLYT. A helical membrane pass occupies residues 210–230; sequence LVLGFAIPVTTICALYTTLLC. Residues 231 to 250 lie on the Cytoplasmic side of the membrane; sequence RLRAIQLDSHAKALDRAKKR. A helical transmembrane segment spans residues 251–271; it reads VTLLVAAILAVCLLCWTPYHL. The Extracellular portion of the chain corresponds to 272–289; the sequence is STIVALTTDLPQTPLVIG. A helical transmembrane segment spans residues 290–312; sequence ISYFITSLSYANSCLNPFLYAFL. Over 313 to 329 the chain is Cytoplasmic; the sequence is DDSFRRSLRQLVSCRSA.

It belongs to the G-protein coupled receptor 1 family.

It is found in the cell membrane. Functionally, interacts specifically with a number of opioid ligands. Receptor for neuropeptides B and W, which may be involved in neuroendocrine system regulation, food intake and the organization of other signals. This chain is Neuropeptides B/W receptor type 1 (Npbwr1), found in Mus musculus (Mouse).